A 388-amino-acid polypeptide reads, in one-letter code: FBD-associated F-box protein At5g60610 (388 aa).

The region spanning 1–47 (MDRISGLPDELLVKIISFVPTKVAVSTSILSKRWESLWKWVPKLECD) is the F-box domain. Positions 337–388 (NWKNIQRSVPKCLKSSLKTLEFAGYTARPEERDFLSFIFKKARCLKTSSISH) constitute an FBD domain.

This Arabidopsis thaliana (Mouse-ear cress) protein is FBD-associated F-box protein At5g60610.